We begin with the raw amino-acid sequence, 91 residues long: MKVSAARLAVILVATALCAPASASPHASDTTPCCFAYIARPLPRAHIKEYFYTSGKCSNPAVVFVTRKNRQVCANPEKKWVREYINSLEMS.

A signal peptide spans methionine 1 to alanine 23. Cystine bridges form between cysteine 33/cysteine 57 and cysteine 34/cysteine 73.

Belongs to the intercrine beta (chemokine CC) family.

The protein localises to the secreted. Functionally, chemoattractant for blood monocytes, memory T-helper cells and eosinophils. Causes the release of histamine from basophils and activates eosinophils. May activate several chemokine receptors including CCR1, CCR3, CCR4 and CCR5. May also be an agonist of the G protein-coupled receptor GPR75. Together with GPR75, may play a role in neuron survival through activation of a downstream signaling pathway involving the PI3, Akt and MAP kinases. By activating GPR75 may also play a role in insulin secretion by islet cells. The polypeptide is C-C motif chemokine 5 (CCL5) (Macaca mulatta (Rhesus macaque)).